The primary structure comprises 247 residues: Carbonic anhydrase (247 aa).

A signal peptide spans 1 to 34 (MMFNKQIFTILILSLSLALAGSGCISEGAEDNVA). 93-95 (RSD) contributes to the substrate binding site. The Proton donor/acceptor role is filled by glutamate 96. 109 to 110 (QD) is a substrate binding site. Histidine 115 provides a ligand contact to Zn(2+). Glutamate 118 is an active-site residue. 2 residues coordinate Zn(2+): histidine 151 and histidine 156. Residue asparagine 236 participates in substrate binding.

It belongs to the gamma-class carbonic anhydrase family. In terms of assembly, homotrimer. Requires Zn(2+) as cofactor.

The protein resides in the secreted. The catalysed reaction is hydrogencarbonate + H(+) = CO2 + H2O. In terms of biological role, reversible hydration of carbon dioxide. Important for growth on acetate. As a probably extracellular enzyme, it may support a H(+)/CH(3)COO(-) symport mechanism and/or conversion of CO(2) to HCO(3)(-), removing excess CO(2) produced by growth on acetate. This is Carbonic anhydrase from Methanosarcina thermophila (strain ATCC 43570 / DSM 1825 / OCM 12 / VKM B-1830 / TM-1).